The sequence spans 354 residues: Guanine nucleotide-binding protein G(t) subunit alpha-3 (354 aa).

A disordered region spans residues 1–27; it reads MGSGISSESKESAKRSKELEKKLQEDA. Residue G2 is the site of N-myristoyl glycine attachment. The segment covering 8-27 has biased composition (basic and acidic residues); the sequence is ESKESAKRSKELEKKLQEDA. The 323-residue stretch at 32–354 folds into the G-alpha domain; the sequence is RTVKLLLLGA…KENLKDCGLF (323 aa). A G1 motif region spans residues 35-48; sequence KLLLLGAGESGKST. GTP-binding positions include 40-47, 175-181, 200-204, 269-272, and A326; these read GAGESGKS, LHSRVKT, DVGGQ, and NKKD. Mg(2+)-binding residues include S47 and T181. The interval 173–181 is G2 motif; sequence DVLHSRVKT. The G3 motif stretch occupies residues 196 to 205; sequence FRMFDVGGQR. The tract at residues 265–272 is G4 motif; it reads VLFLNKKD. A G5 motif region spans residues 324 to 329; that stretch reads TCATDT.

This sequence belongs to the G-alpha family. G(i/o/t/z) subfamily. In terms of assembly, g proteins are composed of 3 units; alpha, beta and gamma, respectively GNAT3, GNB1 and GNG13 for Gustducin heterotrimer for bitter taste transduction. The alpha chain contains the guanine nucleotide binding site. Component of the TAS2R14-GNAT3 complex, consisting of TAS2R14, GNAT3, GNB1 and GNG2; within the complex interacts with TAS2R14; this complex plays a role in the perception of bitterness. Gustducin heterotrimer may also be composed of GNAT3, GNB3 and GNG13. Potential N-myristoylation may anchor alpha-subunit to the inner surface of plasma membrane. Expressed in taste buds (sensory organs of clustered epithelial cells) of the circumvallate, foliate and fungiform papillae of the tongue, as well as in nasoincisor, palatal and epiglottal taste buds at protein level. Expressed in enteroendocrine of the gut, in the lumenal pole of a subset of brush cells lining the stomach and the intestine at protein level. Detected in solitary cells throughout the respiratory track. Expressed also in spermatozoa.

Its subcellular location is the cytoplasm. Guanine nucleotide-binding protein (G protein) alpha subunit playing a prominent role in bitter and sweet taste transduction as well as in umami (monosodium glutamate, monopotassium glutamate, and inosine monophosphate) taste transduction. Transduction by this alpha subunit involves coupling of specific cell-surface receptors with a cGMP-phosphodiesterase; Activation of phosphodiesterase lowers intracellular levels of cAMP and cGMP which may open a cyclic nucleotide-suppressible cation channel leading to influx of calcium, ultimately leading to release of neurotransmitter. Indeed, denatonium and strychnine induce transient reduction in cAMP and cGMP in taste tissue, whereas this decrease is inhibited by GNAT3 antibody. Gustducin heterotrimer transduces response to bitter and sweet compounds via regulation of phosphodiesterase for alpha subunit, as well as via activation of phospholipase C for beta and gamma subunits, with ultimate increase inositol trisphosphate and increase of intracellular Calcium. GNAT3 can functionally couple to taste receptors to transmit intracellular signal: receptor heterodimer TAS1R2/TAS1R3 senses sweetness and TAS1R1/TAS1R3 transduces umami taste, whereas the T2R family GPCRs act as bitter sensors. Also functions as lumenal sugar sensors in the gut to control the expression of the Na+-glucose transporter SGLT1 in response to dietaty sugar, as well as the secretion of Glucagon-like peptide-1, GLP-1 and glucose-dependent insulinotropic polypeptide, GIP. Thus, may modulate the gut capacity to absorb sugars, with implications for the prevention and treatment of malabsorption syndromes and diet-related disorders including diabetes and obesity. This Rattus norvegicus (Rat) protein is Guanine nucleotide-binding protein G(t) subunit alpha-3 (Gnat3).